The primary structure comprises 265 residues: 4-hydroxy-tetrahydrodipicolinate reductase (265 aa).

NAD(+)-binding positions include 7–12 (GASGRM), Asp-33, 96–98 (GTT), and 120–123 (AANF). His-153 acts as the Proton donor/acceptor in catalysis. His-154 contacts (S)-2,3,4,5-tetrahydrodipicolinate. The active-site Proton donor is the Lys-157. A (S)-2,3,4,5-tetrahydrodipicolinate-binding site is contributed by 163 to 164 (GT).

It belongs to the DapB family.

The protein resides in the cytoplasm. It carries out the reaction (S)-2,3,4,5-tetrahydrodipicolinate + NAD(+) + H2O = (2S,4S)-4-hydroxy-2,3,4,5-tetrahydrodipicolinate + NADH + H(+). It catalyses the reaction (S)-2,3,4,5-tetrahydrodipicolinate + NADP(+) + H2O = (2S,4S)-4-hydroxy-2,3,4,5-tetrahydrodipicolinate + NADPH + H(+). Its pathway is amino-acid biosynthesis; L-lysine biosynthesis via DAP pathway; (S)-tetrahydrodipicolinate from L-aspartate: step 4/4. Functionally, catalyzes the conversion of 4-hydroxy-tetrahydrodipicolinate (HTPA) to tetrahydrodipicolinate. The polypeptide is 4-hydroxy-tetrahydrodipicolinate reductase (Cupriavidus necator (strain ATCC 17699 / DSM 428 / KCTC 22496 / NCIMB 10442 / H16 / Stanier 337) (Ralstonia eutropha)).